The primary structure comprises 237 residues: Phosphoribosylaminoimidazole-succinocarboxamide synthase (237 aa).

Belongs to the SAICAR synthetase family.

It carries out the reaction 5-amino-1-(5-phospho-D-ribosyl)imidazole-4-carboxylate + L-aspartate + ATP = (2S)-2-[5-amino-1-(5-phospho-beta-D-ribosyl)imidazole-4-carboxamido]succinate + ADP + phosphate + 2 H(+). The protein operates within purine metabolism; IMP biosynthesis via de novo pathway; 5-amino-1-(5-phospho-D-ribosyl)imidazole-4-carboxamide from 5-amino-1-(5-phospho-D-ribosyl)imidazole-4-carboxylate: step 1/2. In Pseudomonas fluorescens (strain SBW25), this protein is Phosphoribosylaminoimidazole-succinocarboxamide synthase.